Reading from the N-terminus, the 209-residue chain is Probable E3 ubiquitin-protein ligase NleG7 (209 aa).

Belongs to the NleG E3 ligase family. Two sizes of protein are detected in situ; only the smaller protein is secreted.

It localises to the secreted. The protein resides in the host cytoplasm. The enzyme catalyses S-ubiquitinyl-[E2 ubiquitin-conjugating enzyme]-L-cysteine + [acceptor protein]-L-lysine = [E2 ubiquitin-conjugating enzyme]-L-cysteine + N(6)-ubiquitinyl-[acceptor protein]-L-lysine.. Functionally, effector proteins function to alter host cell physiology and promote bacterial survival in host tissues. This protein is probably an E3 ubiquitin-protein ligase that interferes with the host's ubiquitination pathway and targets host proteins for proteasomal degradation. Mice infected with a strain of bacteria deleted for this gene were colonized less quickly by bacteria. The protein is Probable E3 ubiquitin-protein ligase NleG7 of Citrobacter rodentium.